We begin with the raw amino-acid sequence, 509 residues long: Nucleoprotein (509 aa).

Residues 1–404 form a ncore region; that stretch reads MSSVLKAYER…ANTLAKLTTA (404 aa). Residues Lys180, Arg195, Tyr260, Tyr350, and Arg354 each contribute to the RNA site. A ntail region spans residues 405 to 509; sequence NRGADTRGGV…LNAALGDLDI (105 aa). The interval 452–477 is disordered; that stretch reads GTHDDEMPPLEEEEEDDTSAGPRTGP. Acidic residues predominate over residues 458-469; sequence MPPLEEEEEDDT.

This sequence belongs to the paramyxoviruses nucleocapsid family. As to quaternary structure, homomultimer; forms the nucleocapsid. Binds to the viral genomic RNA. N0 interacts with the phosphoprotein (via N-terminus); this interaction allows P to chaperon N0 to avoid N polymerization before encapsidation. Interacts as N-RNA template with the phosphoprotein (via C-terminus); this interaction positions the polymerase on the template.

It localises to the virion. The protein localises to the host cytoplasm. Functionally, forms the helical nucleocapsid (NC), protecting the genome from nucleases. The encapsidated genomic RNA serves as template for transcription and replication; encapsidation by N is coupled to RNA synthesis. Forms the encapsidation complex with the phosphoprotein protein P. Before encapsidation, the newly synthesized free N protein, so-called N0, is chaperoned by P. The protein is Nucleoprotein (NP) of Canis lupus familiaris (Dog).